The chain runs to 510 residues: ATP synthase subunit alpha (510 aa).

Position 169–176 (Gly-169–Thr-176) interacts with ATP.

It belongs to the ATPase alpha/beta chains family. F-type ATPases have 2 components, CF(1) - the catalytic core - and CF(0) - the membrane proton channel. CF(1) has five subunits: alpha(3), beta(3), gamma(1), delta(1), epsilon(1). CF(0) has three main subunits: a(1), b(2) and c(9-12). The alpha and beta chains form an alternating ring which encloses part of the gamma chain. CF(1) is attached to CF(0) by a central stalk formed by the gamma and epsilon chains, while a peripheral stalk is formed by the delta and b chains.

It is found in the cell inner membrane. It catalyses the reaction ATP + H2O + 4 H(+)(in) = ADP + phosphate + 5 H(+)(out). Its function is as follows. Produces ATP from ADP in the presence of a proton gradient across the membrane. The alpha chain is a regulatory subunit. The polypeptide is ATP synthase subunit alpha (Rickettsia massiliae (strain Mtu5)).